We begin with the raw amino-acid sequence, 223 residues long: N-terminal Xaa-Pro-Lys N-methyltransferase 1 (223 aa).

Met1 is modified (N-acetylmethionine). An N-acetylthreonine; in N-terminal Xaa-Pro-Lys N-methyltransferase 1, N-terminally processed modification is found at Thr2. Residues Gly69, Arg74, 91–93, 119–120, and Gln135 each bind S-adenosyl-L-methionine; these read DVT and LQ.

The protein belongs to the methyltransferase superfamily. NTM1 family.

It localises to the nucleus. The enzyme catalyses N-terminal L-alanyl-L-prolyl-L-lysyl-[protein] + 3 S-adenosyl-L-methionine = N-terminal N,N,N-trimethyl-L-alanyl-L-prolyl-L-lysyl-[protein] + 3 S-adenosyl-L-homocysteine + 3 H(+). It catalyses the reaction N-terminal L-seryl-L-prolyl-L-lysyl-[protein] + 3 S-adenosyl-L-methionine = N-terminal N,N,N-trimethyl-L-seryl-L-prolyl-L-lysyl-[protein] + 3 S-adenosyl-L-homocysteine + 3 H(+). The catalysed reaction is N-terminal L-prolyl-L-prolyl-L-lysyl-[protein] + 2 S-adenosyl-L-methionine = N-terminal N,N-dimethyl-L-prolyl-L-prolyl-L-lysyl-[protein] + 2 S-adenosyl-L-homocysteine + 2 H(+). Functionally, distributive alpha-N-methyltransferase that methylates the N-terminus of target proteins containing the N-terminal motif [Ala/Gly/Pro/Ser]-Pro-Lys when the initiator Met is cleaved. Specifically catalyzes mono-, di- or tri-methylation of the exposed alpha-amino group of the Ala, Gly or Ser residue in the [Ala/Gly/Ser]-Pro-Lys motif and mono- or di-methylation of Pro in the Pro-Pro-Lys motif. Some of the substrates may be primed by NTMT2-mediated monomethylation. Catalyzes the trimethylation of the N-terminal Gly in CENPA (after removal of Met-1). Responsible for the N-terminal methylation of KLHL31, MYL2, MYL3, RB1, RCC1, RPL23A and SET. Required during mitosis for normal bipolar spindle formation and chromosome segregation via its action on RCC1. The polypeptide is N-terminal Xaa-Pro-Lys N-methyltransferase 1 (Ntmt1) (Rattus norvegicus (Rat)).